Reading from the N-terminus, the 305-residue chain is tRNA dimethylallyltransferase (305 aa).

Residue 11–18 (GPTAVGKT) coordinates ATP. 13–18 (TAVGKT) contacts substrate. The tract at residues 36 to 39 (DSMQ) is interaction with substrate tRNA.

It belongs to the IPP transferase family. In terms of assembly, monomer. The cofactor is Mg(2+).

The enzyme catalyses adenosine(37) in tRNA + dimethylallyl diphosphate = N(6)-dimethylallyladenosine(37) in tRNA + diphosphate. Functionally, catalyzes the transfer of a dimethylallyl group onto the adenine at position 37 in tRNAs that read codons beginning with uridine, leading to the formation of N6-(dimethylallyl)adenosine (i(6)A). This chain is tRNA dimethylallyltransferase, found in Listeria monocytogenes serotype 4b (strain CLIP80459).